Here is a 264-residue protein sequence, read N- to C-terminus: Thymidylate synthase (264 aa).

DUMP contacts are provided by residues Arg21 and 126–127 (RR). The active-site Nucleophile is Cys146. Residues 166–169 (RSAD), Asn177, and 207–209 (HLY) each bind dUMP. Position 169 (Asp169) interacts with (6R)-5,10-methylene-5,6,7,8-tetrahydrofolate. A (6R)-5,10-methylene-5,6,7,8-tetrahydrofolate-binding site is contributed by Ala263.

Belongs to the thymidylate synthase family. Bacterial-type ThyA subfamily. As to quaternary structure, homodimer.

The protein resides in the cytoplasm. The catalysed reaction is dUMP + (6R)-5,10-methylene-5,6,7,8-tetrahydrofolate = 7,8-dihydrofolate + dTMP. It functions in the pathway pyrimidine metabolism; dTTP biosynthesis. Catalyzes the reductive methylation of 2'-deoxyuridine-5'-monophosphate (dUMP) to 2'-deoxythymidine-5'-monophosphate (dTMP) while utilizing 5,10-methylenetetrahydrofolate (mTHF) as the methyl donor and reductant in the reaction, yielding dihydrofolate (DHF) as a by-product. This enzymatic reaction provides an intracellular de novo source of dTMP, an essential precursor for DNA biosynthesis. The protein is Thymidylate synthase of Halorhodospira halophila (strain DSM 244 / SL1) (Ectothiorhodospira halophila (strain DSM 244 / SL1)).